Here is a 141-residue protein sequence, read N- to C-terminus: HTH-type transcriptional repressor NsrR (141 aa).

An HTH rrf2-type domain is found at 2-129 (QLTSFTDYGL…DQYTLADMVK (128 aa)). The segment at residues 28 to 51 (ISEVTEVYGVSRNHMVKIINQLSR) is a DNA-binding region (H-T-H motif). C91, C96, and C102 together coordinate [2Fe-2S] cluster.

[2Fe-2S] cluster is required as a cofactor.

Functionally, nitric oxide-sensitive repressor of genes involved in protecting the cell against nitrosative stress. May require iron for activity. This chain is HTH-type transcriptional repressor NsrR, found in Pectobacterium atrosepticum (strain SCRI 1043 / ATCC BAA-672) (Erwinia carotovora subsp. atroseptica).